We begin with the raw amino-acid sequence, 235 residues long: Large ribosomal subunit protein uL1 (235 aa).

Belongs to the universal ribosomal protein uL1 family. As to quaternary structure, part of the 50S ribosomal subunit.

Functionally, binds directly to 23S rRNA. The L1 stalk is quite mobile in the ribosome, and is involved in E site tRNA release. Protein L1 is also a translational repressor protein, it controls the translation of the L11 operon by binding to its mRNA. This Lawsonia intracellularis (strain PHE/MN1-00) protein is Large ribosomal subunit protein uL1.